Consider the following 278-residue polypeptide: F-box only protein 17 (278 aa).

In terms of domain architecture, F-box spans 15-62 (SLALDALPPELLVQVLSHVPPRSLVTRCRPVCRAWRDIVDGPTVWLLQ). The FBA domain occupies 99–275 (YCLRAPFGRN…VTHSSVRVRI (177 aa)).

As to quaternary structure, part of a SCF (SKP1-cullin-F-box) protein ligase complex. Interacts with SKP1 and CUL1. Expressed in heart, skeletal muscle, liver and kidney. Expressed at lower levels in spleen and brain.

Its function is as follows. Substrate-recognition component of the SCF (SKP1-CUL1-F-box protein)-type E3 ubiquitin ligase complex. Able to recognize and bind denatured glycoproteins, which are modified with complex-type oligosaccharides. Also recognizes sulfated glycans. Does not bind high-mannose glycoproteins. This is F-box only protein 17 (FBXO17) from Homo sapiens (Human).